We begin with the raw amino-acid sequence, 428 residues long: Enolase (428 aa).

Q163 serves as a coordination point for (2R)-2-phosphoglycerate. The Proton donor role is filled by E205. Positions 242, 286, and 313 each coordinate Mg(2+). (2R)-2-phosphoglycerate contacts are provided by K338, R367, S368, and K389. K338 serves as the catalytic Proton acceptor.

The protein belongs to the enolase family. It depends on Mg(2+) as a cofactor.

The protein localises to the cytoplasm. The protein resides in the secreted. It is found in the cell surface. The enzyme catalyses (2R)-2-phosphoglycerate = phosphoenolpyruvate + H2O. It participates in carbohydrate degradation; glycolysis; pyruvate from D-glyceraldehyde 3-phosphate: step 4/5. Functionally, catalyzes the reversible conversion of 2-phosphoglycerate (2-PG) into phosphoenolpyruvate (PEP). It is essential for the degradation of carbohydrates via glycolysis. The sequence is that of Enolase from Verminephrobacter eiseniae (strain EF01-2).